The chain runs to 348 residues: Probable dual-specificity RNA methyltransferase RlmN (348 aa).

Catalysis depends on Glu-93, which acts as the Proton acceptor. The region spanning 99 to 333 (TEKRLTACLS…VSLRKSRGSD (235 aa)) is the Radical SAM core domain. A disulfide bridge connects residues Cys-106 and Cys-338. 3 residues coordinate [4Fe-4S] cluster: Cys-113, Cys-117, and Cys-120. Residues 160 to 161 (GE), Ser-190, 219 to 221 (SLH), and Asn-295 contribute to the S-adenosyl-L-methionine site. The S-methylcysteine intermediate role is filled by Cys-338.

This sequence belongs to the radical SAM superfamily. RlmN family. Requires [4Fe-4S] cluster as cofactor.

Its subcellular location is the cytoplasm. The catalysed reaction is adenosine(2503) in 23S rRNA + 2 reduced [2Fe-2S]-[ferredoxin] + 2 S-adenosyl-L-methionine = 2-methyladenosine(2503) in 23S rRNA + 5'-deoxyadenosine + L-methionine + 2 oxidized [2Fe-2S]-[ferredoxin] + S-adenosyl-L-homocysteine. It catalyses the reaction adenosine(37) in tRNA + 2 reduced [2Fe-2S]-[ferredoxin] + 2 S-adenosyl-L-methionine = 2-methyladenosine(37) in tRNA + 5'-deoxyadenosine + L-methionine + 2 oxidized [2Fe-2S]-[ferredoxin] + S-adenosyl-L-homocysteine. Functionally, specifically methylates position 2 of adenine 2503 in 23S rRNA and position 2 of adenine 37 in tRNAs. In Prochlorococcus marinus (strain MIT 9515), this protein is Probable dual-specificity RNA methyltransferase RlmN.